Here is a 465-residue protein sequence, read N- to C-terminus: MGSGKVFLFSPSLLWSQTRGVRLIFLLLTLHLGNCIDKADDEDDEDLTMNKTWVLAPKIHEGDITQILNSLLQGYDNKLRPDIGVRPTVIETDVYVNSIGPVDPINMEYTIDIIFAQTWFDSRLKFNSTMKVLMLNSNMVGKIWIPDTFFRNSRKSDAHWITTPNRLLRIWSDGRVLYTLRLTINAECYLQLHNFPMDEHSCPLEFSSYGYPKNEIEYKWKKPSVEVADPKYWRLYQFAFVGLRNSTEISHTISGDYIIMTIFFDLSRRMGYFTIQTYIPCILTVVLSWVSFWINKDAVPARTSLGITTVLTMTTLSTIARKSLPKVSYVTAMDLFVSVCFIFVFAALMEYGTLHYFTSNNKGKTTRDRKLKSKTSVSPGLHAGSTLIPMNNISMPQGEDDYGYQCLEGKDCATFFCCFEDCRTGSWREGRIHIRIAKIDSYSRIFFPTAFALFNLVYWVGYLYL.

Residues 1 to 20 form the signal peptide; it reads MGSGKVFLFSPSLLWSQTRG. At 21-273 the chain is on the extracellular side; the sequence is VRLIFLLLTL…FDLSRRMGYF (253 aa). N-linked (GlcNAc...) asparagine glycans are attached at residues Asn-50 and Asn-127. Cys-188 and Cys-202 form a disulfide bridge. Asn-245 is a glycosylation site (N-linked (GlcNAc...) asparagine). Residues 274 to 294 traverse the membrane as a helical segment; the sequence is TIQTYIPCILTVVLSWVSFWI. Residues 295 to 300 lie on the Cytoplasmic side of the membrane; it reads NKDAVP. The helical transmembrane segment at 301-320 threads the bilayer; sequence ARTSLGITTVLTMTTLSTIA. The Extracellular segment spans residues 321 to 328; sequence RKSLPKVS. Residues 329–349 form a helical membrane-spanning segment; that stretch reads YVTAMDLFVSVCFIFVFAALM. The Cytoplasmic portion of the chain corresponds to 350 to 444; sequence EYGTLHYFTS…RIAKIDSYSR (95 aa). The chain crosses the membrane as a helical span at residues 445–465; the sequence is IFFPTAFALFNLVYWVGYLYL.

The protein belongs to the ligand-gated ion channel (TC 1.A.9) family. Gamma-aminobutyric acid receptor (TC 1.A.9.5) subfamily. GABRG1 sub-subfamily. Heteropentamer, formed by a combination of alpha (GABRA1-6), beta (GABRB1-3), gamma (GABRG1-3), delta (GABRD), epsilon (GABRE), rho (GABRR1-3), pi (GABRP) and theta (GABRQ) chains, each subunit exhibiting distinct physiological and pharmacological properties. Post-translationally, may be palmitoylated. As to expression, expressed in brain.

It is found in the postsynaptic cell membrane. It localises to the cell membrane. It catalyses the reaction chloride(in) = chloride(out). Functionally, gamma subunit of the heteropentameric ligand-gated chloride channel gated by gamma-aminobutyric acid (GABA), a major inhibitory neurotransmitter in the brain. GABA-gated chloride channels, also named GABA(A) receptors (GABAAR), consist of five subunits arranged around a central pore and contain GABA active binding site(s) located at the alpha and beta subunit interface(s). When activated by GABA, GABAARs selectively allow the flow of chloride anions across the cell membrane down their electrochemical gradient. Chloride influx into the postsynaptic neuron following GABAAR opening decreases the neuron ability to generate a new action potential, thereby reducing nerve transmission. This is Gamma-aminobutyric acid receptor subunit gamma-1 from Rattus norvegicus (Rat).